The sequence spans 214 residues: Small ribosomal subunit protein uS5 (214 aa).

One can recognise an S5 DRBM domain in the interval 54–117; it reads LRYDIVDIGI…RDAKMRIIPV (64 aa).

Belongs to the universal ribosomal protein uS5 family. As to quaternary structure, part of the 30S ribosomal subunit. Contacts protein S4.

With S4 and S12 plays an important role in translational accuracy. The protein is Small ribosomal subunit protein uS5 of Sulfolobus acidocaldarius (strain ATCC 33909 / DSM 639 / JCM 8929 / NBRC 15157 / NCIMB 11770).